Reading from the N-terminus, the 684-residue chain is Kelch repeat and BTB domain-containing protein 7 (684 aa).

A disordered region spans residues 1–27; sequence MQSREDVPRSRRLASPRGGRRPKRISK. Positions 10-26 are enriched in basic residues; the sequence is SRRLASPRGGRRPKRIS. Ser-29 carries the post-translational modification Phosphoserine. The BTB domain occupies 63-138; that stretch reads CDVTIEVVTP…CYTGRVSLSE (76 aa). 5 Kelch repeats span residues 386–435, 436–484, 486–523, 524–564, and 567–616; these read AVCV…YLNG, YIYI…VVQN, LYAV…VFND, EIYC…IVNH, and KLLL…CLCA. The segment at 630-666 is disordered; the sequence is ITEEDDARSESSTEWDLDGFSELDSESGSSSSFSDDE. A compositionally biased stretch (acidic residues) spans 631–654; it reads TEEDDARSESSTEWDLDGFSELDS. Residues 668 to 671 carry the ATG8 interaction motif (AIM) motif; that stretch reads WVQV.

Core component of a BCR3 (BTB-CUL3-RBX1) E3 ubiquitin ligase complex, also named Cul3-RING ubiquitin ligase complex CUL3(KBTBD6/7), composed of CUL3, RBX1, KBTBD6 and KBTBD7. Interacts with GABARAP; the interaction is direct and is required for the ubiquitination of TIAM1. Interacts with GABARAPL1, GABARAPL2 and MAP1LC3B; the interaction is direct.

Its subcellular location is the cytoplasm. The protein resides in the nucleus. The protein operates within protein modification; protein ubiquitination. In terms of biological role, as part of the CUL3(KBTBD6/7) E3 ubiquitin ligase complex functions as a substrate adapter for the RAC1 guanine exchange factor (GEF) TIAM1, mediating its 'Lys-48' ubiquitination and proteasomal degradation. By controlling this ubiquitination, regulates RAC1 signal transduction and downstream biological processes including the organization of the cytoskeleton, cell migration and cell proliferation. Ubiquitination of TIAM1 requires the membrane-associated protein GABARAP which may restrict locally the activity of the complex. This Homo sapiens (Human) protein is Kelch repeat and BTB domain-containing protein 7.